The chain runs to 349 residues: Polyamine aminopropyltransferase 2 (349 aa).

The region spanning 29–267 (DGAITAIEDS…SSWGFLLASD (239 aa)) is the PABS domain. Glutamine 60 serves as a coordination point for S-methyl-5'-thioadenosine. Histidine 91 and glutamate 115 together coordinate spermidine. Residues aspartate 135 and 167–168 (DG) contribute to the S-methyl-5'-thioadenosine site. Aspartate 185 (proton acceptor) is an active-site residue. Proline 194 contributes to the S-methyl-5'-thioadenosine binding site.

The protein belongs to the spermidine/spermine synthase family. As to quaternary structure, homodimer or homotetramer.

It localises to the cytoplasm. The enzyme catalyses S-adenosyl 3-(methylsulfanyl)propylamine + putrescine = S-methyl-5'-thioadenosine + spermidine + H(+). Its pathway is amine and polyamine biosynthesis; spermidine biosynthesis; spermidine from putrescine: step 1/1. Catalyzes the irreversible transfer of a propylamine group from the amino donor S-adenosylmethioninamine (decarboxy-AdoMet) to putrescine (1,4-diaminobutane) to yield spermidine. This Pseudomonas aeruginosa (strain ATCC 15692 / DSM 22644 / CIP 104116 / JCM 14847 / LMG 12228 / 1C / PRS 101 / PAO1) protein is Polyamine aminopropyltransferase 2.